Consider the following 144-residue polypeptide: Large ribosomal subunit protein uL11 (144 aa).

This sequence belongs to the universal ribosomal protein uL11 family. Part of the ribosomal stalk of the 50S ribosomal subunit. Interacts with L10 and the large rRNA to form the base of the stalk. L10 forms an elongated spine to which L12 dimers bind in a sequential fashion forming a multimeric L10(L12)X complex. In terms of processing, one or more lysine residues are methylated.

In terms of biological role, forms part of the ribosomal stalk which helps the ribosome interact with GTP-bound translation factors. This chain is Large ribosomal subunit protein uL11, found in Corynebacterium glutamicum (strain R).